A 93-amino-acid polypeptide reads, in one-letter code: Bacterial microcompartment shell protein PduA (93 aa).

The region spanning Ala-5 to Pro-89 is the BMC domain.

This sequence belongs to the bacterial microcompartments protein family. As to quaternary structure, homohexamer with a central pore; Lys-26 and Arg-79 interactions are very important for hexamer symmetry. The hexamers pack against each other in arrays. Interacts individually with shell proteins PduB, PduB', PduJ, PduK, PduN and PduU. Modeling suggests PduC, PduD, PduE, PduL and PduP interact with a cleft formed by the C-terminal segments of 2 adjacent PduA subunits (on the BMC luminal side) in the hexamer.

The protein localises to the bacterial microcompartment. The protein operates within polyol metabolism; 1,2-propanediol degradation. One of the major shell proteins of the bacterial microcompartment (BMC) dedicated to 1,2-propanediol (1,2-PD) degradation, probably important for metabolite diffusion into and out of the BMC. Overexpression of a C-terminally mutated form (PduA*) makes thin parallel filaments with a honeycomb-like assembly in cross-section that probably form nanotubes. The filaments interfere with septation. PduA is probably the hub for binding multiple enzymes to the interior of the BMC. At least one of PduA or PduJ is required for BMC assembly; it must be encoded as the first gene in the pdu operon. Its function is as follows. Expression of a cosmid containing the full 21-gene pdu operon in E.coli allows E.coli to grow on 1,2-PD with the appearance of BMCs in its cytoplasm. Overexpression of this protein leads to aberrant intracellular filaments. In terms of biological role, the 1,2-PD-specific bacterial microcompartment (BMC) concentrates low levels of 1,2-PD catabolic enzymes, concentrates volatile reaction intermediates thus enhancing pathway flux and keeps the level of toxic, mutagenic propionaldehyde low. This is Bacterial microcompartment shell protein PduA from Citrobacter freundii.